A 116-amino-acid chain; its full sequence is Fluoride-specific ion channel FluC 2 (116 aa).

2 helical membrane passes run 3-23 and 43-63; these read LLTALAVGAGGAAGAVARYAV and LLFGVAIGADFGGAPAVAVTV. Residues Gly67 and Thr70 each contribute to the Na(+) site. The chain crosses the membrane as a helical span at residues 96–116; sequence VGTLAAALLAVFLGIALGAAL.

It belongs to the fluoride channel Fluc/FEX (TC 1.A.43) family.

The protein resides in the cell membrane. It carries out the reaction fluoride(in) = fluoride(out). Its activity is regulated as follows. Na(+) is not transported, but it plays an essential structural role and its presence is essential for fluoride channel function. Functionally, fluoride-specific ion channel. Important for reducing fluoride concentration in the cell, thus reducing its toxicity. This is Fluoride-specific ion channel FluC 2 from Natronomonas pharaonis (strain ATCC 35678 / DSM 2160 / CIP 103997 / JCM 8858 / NBRC 14720 / NCIMB 2260 / Gabara) (Halobacterium pharaonis).